A 143-amino-acid polypeptide reads, in one-letter code: Transcriptional regulator MraZ (143 aa).

2 SpoVT-AbrB domains span residues 5 to 47 (EYTH…PLIE) and 76 to 119 (ACEC…DAER).

The protein belongs to the MraZ family. In terms of assembly, forms oligomers.

Its subcellular location is the cytoplasm. The protein localises to the nucleoid. The protein is Transcriptional regulator MraZ of Limosilactobacillus fermentum (strain NBRC 3956 / LMG 18251) (Lactobacillus fermentum).